The sequence spans 276 residues: MTKTEESPLHFFDIFSTLPGTSKSWSSNVLKIRMVLNYKGIPYTQSFHSYPDIAPLLQSLSVPPHKQGRFKYTLPAICHPSSVKSSPSGAMMDSLPIACHLDETYPDPPLFPSGEASYALALAIGKLMVPAALKTCDLLLPKAEEVLDDRGKEYFVRTRTEIFGKPLSELRPKTEEGVRAIVDGMKADMEVFISMLRGRGEGKKSGPFLEGEKPGYADFILVTFLSWSHRFDMELWREIMDMGNGEFRALWHASVQWLEGQGEEKEWAVPQLSTVD.

Residues 16–109 enclose the GST N-terminal domain; it reads STLPGTSKSW…HLDETYPDPP (94 aa).

It belongs to the GST superfamily.

It functions in the pathway mycotoxin biosynthesis. In terms of biological role, glutathione S-transferase-like protein; part of the gene cluster that mediates the biosynthesis of the secondary metabolite ustiloxin B, an antimitotic tetrapeptide. First, ustA is processed by the subtilisin-like endoprotease Kex2 that is outside the ustiloxin B gene cluster, at the C-terminal side of Arg-Lys, after transfer to Golgi apparatus through the endoplasmic reticulum (ER). Cleavage by KEX2 generates 16 peptides YAIG-I to YAIG-XVI. To process the precursor peptide further, at least two peptidases are necessary to cleave the N-terminal and C-terminal sides of the Tyr-Ala-Ile-Gly core peptide which serves as backbone for the synthesis of ustiloxin B, through cyclization and modification of the tyrosine with a non-protein coding amino acid, norvaline. One of the two peptidases must be the serine peptidase ustP; and the other pepdidase is probably ustH. Macrocyclization of the core peptide derived from ustA requires the tyrosinase ustQ, as well as the homologous oxidases ustYa and ustYb, and leads to the production of the first cyclization product N-desmethylustiloxin F. For the formation of N-desmethylustiloxin F, three oxidation steps are required, hydroxylation at the benzylic position, hydroxylation at either the aromatic ring of Tyr or beta-position of Ile, and oxidative cyclization. UstQ may catalyze the oxidation of a phenol moiety, whereas the ustYa and ustYb are most likely responsible for the remaining two-step oxidations. N-desmethylustiloxin F is then methylated by ustM to yield ustiloxin F which in turn substrate of the cytochrome P450 monooxygenase ustC which catalyzes the formation of S-deoxyustiloxin H. The flavoprotein monooxygenases ustF1 and ustF2 then participate in the modification of the side chain of S-deoxyustiloxin H, leading to the synthesis of an oxime intermediate, via ustiloxin H. Finally, carboxylative dehydration performed by the cysteine desulfurase-like protein ustD yields ustiloxin B. The protein is Glutathione S-transferase-like protein ustS of Aspergillus flavus (strain ATCC 200026 / FGSC A1120 / IAM 13836 / NRRL 3357 / JCM 12722 / SRRC 167).